The sequence spans 574 residues: R-linalool synthase, chloroplastic (574 aa).

The transit peptide at 1 to 40 directs the protein to the chloroplast; it reads MSCARITVTLPYRSAKTSIQRGITHCPALLRPRFSACTPL. A compositionally biased stretch (polar residues) spans 52–61; that stretch reads INGDNSPLKN. The disordered stretch occupies residues 52-71; the sequence is INGDNSPLKNTHQHVEERSS. (2E)-geranyl diphosphate-binding residues include R287, D324, D328, R467, and D470. Mg(2+)-binding residues include D324 and D328. The DDXXD motif signature appears at 324–328; the sequence is DDIFD. Residues D470, T474, and E478 each contribute to the Mg(2+) site.

It belongs to the terpene synthase family. Tpsb subfamily. Mg(2+) is required as a cofactor. It depends on Mn(2+) as a cofactor.

The protein localises to the plastid. Its subcellular location is the chloroplast. The catalysed reaction is (2E)-geranyl diphosphate + H2O = (R)-linalool + diphosphate. It functions in the pathway secondary metabolite biosynthesis; terpenoid biosynthesis. Its function is as follows. Monoterpene synthase that catalyzes the formation of (3R)-linalool from geranyl diphosphate. In Ocimum basilicum (Sweet basil), this protein is R-linalool synthase, chloroplastic (LIS).